Here is a 76-residue protein sequence, read N- to C-terminus: Sec-independent protein translocase protein TatA (76 aa).

A helical transmembrane segment spans residues 1–21; the sequence is MGGLSIWHWLIVLLIVALVFG. The interval 43–76 is disordered; that stretch reads MKEGEAPADAQQLPRSGSVDVNAKETTRSDSNKA. Basic and acidic residues predominate over residues 64 to 76; sequence NAKETTRSDSNKA.

This sequence belongs to the TatA/E family. The Tat system comprises two distinct complexes: a TatABC complex, containing multiple copies of TatA, TatB and TatC subunits, and a separate TatA complex, containing only TatA subunits. Substrates initially bind to the TatABC complex, which probably triggers association of the separate TatA complex to form the active translocon.

The protein resides in the cell inner membrane. In terms of biological role, part of the twin-arginine translocation (Tat) system that transports large folded proteins containing a characteristic twin-arginine motif in their signal peptide across membranes. TatA could form the protein-conducting channel of the Tat system. In Burkholderia lata (strain ATCC 17760 / DSM 23089 / LMG 22485 / NCIMB 9086 / R18194 / 383), this protein is Sec-independent protein translocase protein TatA.